Here is a 415-residue protein sequence, read N- to C-terminus: Gamma-glutamyl phosphate reductase (415 aa).

It belongs to the gamma-glutamyl phosphate reductase family.

The protein resides in the cytoplasm. It carries out the reaction L-glutamate 5-semialdehyde + phosphate + NADP(+) = L-glutamyl 5-phosphate + NADPH + H(+). The protein operates within amino-acid biosynthesis; L-proline biosynthesis; L-glutamate 5-semialdehyde from L-glutamate: step 2/2. Its function is as follows. Catalyzes the NADPH-dependent reduction of L-glutamate 5-phosphate into L-glutamate 5-semialdehyde and phosphate. The product spontaneously undergoes cyclization to form 1-pyrroline-5-carboxylate. The protein is Gamma-glutamyl phosphate reductase of Clostridium perfringens (strain ATCC 13124 / DSM 756 / JCM 1290 / NCIMB 6125 / NCTC 8237 / Type A).